The sequence spans 377 residues: Queuine tRNA-ribosyltransferase (377 aa).

Aspartate 89 (proton acceptor) is an active-site residue. Substrate contacts are provided by residues 89–93 (DSGGF), aspartate 143, glutamine 187, and glycine 214. The RNA binding stretch occupies residues 245 to 251 (GVGKPED). Aspartate 264 serves as the catalytic Nucleophile. The RNA binding; important for wobble base 34 recognition stretch occupies residues 269–273 (TRNAR). Cysteine 302, cysteine 304, cysteine 307, and histidine 333 together coordinate Zn(2+).

The protein belongs to the queuine tRNA-ribosyltransferase family. As to quaternary structure, homodimer. Within each dimer, one monomer is responsible for RNA recognition and catalysis, while the other monomer binds to the replacement base PreQ1. Zn(2+) serves as cofactor.

It carries out the reaction 7-aminomethyl-7-carbaguanine + guanosine(34) in tRNA = 7-aminomethyl-7-carbaguanosine(34) in tRNA + guanine. The protein operates within tRNA modification; tRNA-queuosine biosynthesis. Functionally, catalyzes the base-exchange of a guanine (G) residue with the queuine precursor 7-aminomethyl-7-deazaguanine (PreQ1) at position 34 (anticodon wobble position) in tRNAs with GU(N) anticodons (tRNA-Asp, -Asn, -His and -Tyr). Catalysis occurs through a double-displacement mechanism. The nucleophile active site attacks the C1' of nucleotide 34 to detach the guanine base from the RNA, forming a covalent enzyme-RNA intermediate. The proton acceptor active site deprotonates the incoming PreQ1, allowing a nucleophilic attack on the C1' of the ribose to form the product. After dissociation, two additional enzymatic reactions on the tRNA convert PreQ1 to queuine (Q), resulting in the hypermodified nucleoside queuosine (7-(((4,5-cis-dihydroxy-2-cyclopenten-1-yl)amino)methyl)-7-deazaguanosine). The chain is Queuine tRNA-ribosyltransferase from Shewanella halifaxensis (strain HAW-EB4).